The primary structure comprises 247 residues: UPF0309 protein Teth39_1980 (247 aa).

Residues 31-213 (IANSLLKEED…EAEIVFIMIK (183 aa)) enclose the SIS domain.

Belongs to the UPF0309 family.

The chain is UPF0309 protein Teth39_1980 from Thermoanaerobacter pseudethanolicus (strain ATCC 33223 / 39E) (Clostridium thermohydrosulfuricum).